Here is a 218-residue protein sequence, read N- to C-terminus: Phosphatidylserine decarboxylase proenzyme (218 aa).

The Schiff-base intermediate with substrate; via pyruvic acid role is filled by serine 188. Serine 188 is subject to Pyruvic acid (Ser); by autocatalysis.

It belongs to the phosphatidylserine decarboxylase family. PSD-A subfamily. As to quaternary structure, heterodimer of a large membrane-associated beta subunit and a small pyruvoyl-containing alpha subunit. It depends on pyruvate as a cofactor. Is synthesized initially as an inactive proenzyme. Formation of the active enzyme involves a self-maturation process in which the active site pyruvoyl group is generated from an internal serine residue via an autocatalytic post-translational modification. Two non-identical subunits are generated from the proenzyme in this reaction, and the pyruvate is formed at the N-terminus of the alpha chain, which is derived from the carboxyl end of the proenzyme. The post-translation cleavage follows an unusual pathway, termed non-hydrolytic serinolysis, in which the side chain hydroxyl group of the serine supplies its oxygen atom to form the C-terminus of the beta chain, while the remainder of the serine residue undergoes an oxidative deamination to produce ammonia and the pyruvoyl prosthetic group on the alpha chain.

The protein localises to the cell membrane. The enzyme catalyses a 1,2-diacyl-sn-glycero-3-phospho-L-serine + H(+) = a 1,2-diacyl-sn-glycero-3-phosphoethanolamine + CO2. It functions in the pathway phospholipid metabolism; phosphatidylethanolamine biosynthesis; phosphatidylethanolamine from CDP-diacylglycerol: step 2/2. Catalyzes the formation of phosphatidylethanolamine (PtdEtn) from phosphatidylserine (PtdSer). The polypeptide is Phosphatidylserine decarboxylase proenzyme (Streptomyces coelicolor (strain ATCC BAA-471 / A3(2) / M145)).